The sequence spans 231 residues: Large ribosomal subunit protein uL1 (231 aa).

It belongs to the universal ribosomal protein uL1 family. As to quaternary structure, part of the 50S ribosomal subunit.

Functionally, binds directly to 23S rRNA. The L1 stalk is quite mobile in the ribosome, and is involved in E site tRNA release. Its function is as follows. Protein L1 is also a translational repressor protein, it controls the translation of the L11 operon by binding to its mRNA. This is Large ribosomal subunit protein uL1 from Azoarcus sp. (strain BH72).